Here is a 308-residue protein sequence, read N- to C-terminus: Phenylcoumaran benzylic ether reductase TP7 (308 aa).

NADP(+)-binding positions include 11–17 (GGTGYIG), Arg36, and Lys45. Lys133 (proton acceptor) is an active-site residue. Arg137 contributes to the NADP(+) binding site.

It belongs to the NmrA-type oxidoreductase family. Isoflavone reductase subfamily. As to expression, expressed in flowers. Expressed at low levels in stems.

The enzyme catalyses (-)-dehydrodiconiferyl alcohol + NADPH + H(+) = (S)-isodihydrodehydrodiconiferyl alcohol + NADP(+). The catalysed reaction is (+)-dehydrodiconiferyl alcohol + NADPH + H(+) = (R)-isodihydrodehydrodiconiferyl alcohol + NADP(+). It carries out the reaction (2R,3S)-dihydrodehydrodiconiferyl alcohol + NADPH + H(+) = (S)-tetrahydrodehydrodiconiferyl alcohol + NADP(+). It catalyses the reaction (2S,3R)-dihydrodehydrodiconiferyl alcohol + NADPH + H(+) = (R)-tetrahydrodehydrodiconiferyl alcohol + NADP(+). Functionally, oxidoreductase involved in lignan biosynthesis. Catalyzes the NADPH-dependent reduction of phenylcoumaran benzylic ethers. Converts dehydrodiconiferyl alcohol (DDC) to isodihydrodehydrodiconiferyl alcohol (IDDDC), and dihydrodehydrodiconiferyl alcohol (DDDC) to tetrahydrodehydrodiconiferyl alcohol (TDDC). The protein is Phenylcoumaran benzylic ether reductase TP7 of Nicotiana tabacum (Common tobacco).